We begin with the raw amino-acid sequence, 88 residues long: Small ribosomal subunit protein uS15 (88 aa).

This sequence belongs to the universal ribosomal protein uS15 family. Part of the 30S ribosomal subunit. Forms a bridge to the 50S subunit in the 70S ribosome, contacting the 23S rRNA.

Its function is as follows. One of the primary rRNA binding proteins, it binds directly to 16S rRNA where it helps nucleate assembly of the platform of the 30S subunit by binding and bridging several RNA helices of the 16S rRNA. In terms of biological role, forms an intersubunit bridge (bridge B4) with the 23S rRNA of the 50S subunit in the ribosome. This is Small ribosomal subunit protein uS15 from Mycoplasmopsis agalactiae (strain NCTC 10123 / CIP 59.7 / PG2) (Mycoplasma agalactiae).